Consider the following 76-residue polypeptide: Small ribosomal subunit protein bS18 (76 aa).

This sequence belongs to the bacterial ribosomal protein bS18 family. In terms of assembly, part of the 30S ribosomal subunit. Forms a tight heterodimer with protein bS6.

Its function is as follows. Binds as a heterodimer with protein bS6 to the central domain of the 16S rRNA, where it helps stabilize the platform of the 30S subunit. The chain is Small ribosomal subunit protein bS18 from Symbiobacterium thermophilum (strain DSM 24528 / JCM 14929 / IAM 14863 / T).